A 450-amino-acid polypeptide reads, in one-letter code: MILLVNLFVLLSVVCVLLNLAGFILGCQGAQFVSSVPRCDLVDLGEGKICFCCEEFQPAKCTDKENALKLFPVQPCSAVHLLLKKVLFALCALNALTTTVCLVAAALRYLQIFATRRSCIDESQISAEEAEDHGRIPDPDDFVPPVPPPSYFATFYSCTPRMNRRMVGPDVIPLPHIYGARIKGVEVFCPLDPPPPYEAVVSQMDQEQGSSFQMSEGSEAAVIPLDLGCTQVTQDGDIPNIPAEENASTSTPSSTLVRPIRSRRALPPLRTRSKSDPVLHPSEERAAPVLSCEAATQTERRLDLAAVTLRRGLRSRASRCRPRSLIDYKSYMDTKLLVARFLEQSSCTMTPDIHELVENIKSVLKSDEEHMEEAITSASFLEQIMAPLQPSTSRAHKLPSRRQPGLLHLQSCGDLHTFTPAGRPRAERRPRRVEAERPHSLIGVIRETVL.

Residues 1 to 29 form the signal peptide; the sequence is MILLVNLFVLLSVVCVLLNLAGFILGCQG. Topologically, residues 30–85 are lumenal; the sequence is AQFVSSVPRCDLVDLGEGKICFCCEEFQPAKCTDKENALKLFPVQPCSAVHLLLKK. Residues 86–106 form a helical membrane-spanning segment; it reads VLFALCALNALTTTVCLVAAA. The Cytoplasmic segment spans residues 107-450; that stretch reads LRYLQIFATR…LIGVIRETVL (344 aa). The segment at 107–450 is mediates interaction with EPN1; that stretch reads LRYLQIFATR…LIGVIRETVL (344 aa). 2 consecutive short sequence motifs (PPxY; mediates interaction with ITCH) follow at residues 148–151 and 194–197; these read PPSY and PPPY. The tract at residues 235 to 284 is disordered; it reads DGDIPNIPAEENASTSTPSSTLVRPIRSRRALPPLRTRSKSDPVLHPSEE. A compositionally biased stretch (polar residues) spans 246–256; sequence NASTSTPSSTL. A compositionally biased stretch (basic and acidic residues) spans 273–284; sequence SKSDPVLHPSEE. Lysine 274 participates in a covalent cross-link: Glycyl lysine isopeptide (Lys-Gly) (interchain with G-Cter in ubiquitin). Serine 275 is modified (phosphoserine). Residues lysine 329 and lysine 365 each participate in a glycyl lysine isopeptide (Lys-Gly) (interchain with G-Cter in ubiquitin) cross-link.

Belongs to the ENTREP family. In terms of assembly, interacts with ITCH; enhances the ubiquitination of CXCR4 by ITCH and the subsequent endocytosis and desensitization of the receptor. Interacts with EPN1. In terms of processing, monoubiquitinated at Lys-274, Lys-329 and Lys-365 by ITCH. In terms of tissue distribution, prominently expressed in muscle.

It localises to the early endosome membrane. The protein resides in the late endosome membrane. It is found in the recycling endosome membrane. The protein localises to the cell membrane. Functionally, functions as an activator of the E3 ubiquitin protein ligase ITCH in the ubiquitination of the CXCL12-activated CXCR4 receptor. Thereby, triggers CXCR4 endocytosis and desensitization, negatively regulating the CXCL12/CXCR4 signaling pathway. This Homo sapiens (Human) protein is Endosomal transmembrane epsin interactor 1.